The sequence spans 423 residues: Adenylosuccinate synthetase (423 aa).

Residues 11–17 and 39–41 each bind GTP; these read GDEGKGK and GHT. The active-site Proton acceptor is the Asp12. Mg(2+)-binding residues include Asp12 and Gly39. Residues 12-15, 37-40, Thr127, Arg141, Gln223, Thr238, and Arg302 each bind IMP; these read DEGK and NAGH. His40 serves as the catalytic Proton donor. Residue 298–304 coordinates substrate; it reads TTTGRSR. GTP-binding positions include Arg304, 330-332, and 412-414; these read KLD and SVG.

Belongs to the adenylosuccinate synthetase family. In terms of assembly, homodimer. Requires Mg(2+) as cofactor.

It localises to the cytoplasm. It catalyses the reaction IMP + L-aspartate + GTP = N(6)-(1,2-dicarboxyethyl)-AMP + GDP + phosphate + 2 H(+). Its pathway is purine metabolism; AMP biosynthesis via de novo pathway; AMP from IMP: step 1/2. Plays an important role in the de novo pathway of purine nucleotide biosynthesis. Catalyzes the first committed step in the biosynthesis of AMP from IMP. The polypeptide is Adenylosuccinate synthetase (Methanococcoides burtonii (strain DSM 6242 / NBRC 107633 / OCM 468 / ACE-M)).